The chain runs to 110 residues: Hydrogenase maturation factor HypA (110 aa).

Residue His2 participates in Ni(2+) binding. The Zn(2+) site is built by Cys73, Cys76, Cys87, and Cys89.

It belongs to the HypA/HybF family.

In terms of biological role, involved in the maturation of [NiFe] hydrogenases. Required for nickel insertion into the metal center of the hydrogenase. The protein is Hydrogenase maturation factor HypA of Archaeoglobus fulgidus (strain ATCC 49558 / DSM 4304 / JCM 9628 / NBRC 100126 / VC-16).